A 72-amino-acid polypeptide reads, in one-letter code: Large ribosomal subunit protein bL31 (72 aa).

Residues cysteine 16, cysteine 18, cysteine 38, and cysteine 41 each coordinate Zn(2+).

This sequence belongs to the bacterial ribosomal protein bL31 family. Type A subfamily. Part of the 50S ribosomal subunit. Zn(2+) is required as a cofactor.

Its function is as follows. Binds the 23S rRNA. The sequence is that of Large ribosomal subunit protein bL31 from Francisella tularensis subsp. holarctica (strain LVS).